The sequence spans 305 residues: Tyrosine recombinase XerD (305 aa).

Residues 9–94 form the Core-binding (CB) domain; that stretch reads MQDFGYVEQF…AIRRLFQYLH (86 aa). In terms of domain architecture, Tyr recombinase spans 115–299; it reads RLPKDISEEQ…ATERLKQIHS (185 aa). Active-site residues include Arg155, Lys179, His251, Arg254, and His277. The active-site O-(3'-phospho-DNA)-tyrosine intermediate is Tyr286.

This sequence belongs to the 'phage' integrase family. XerD subfamily. In terms of assembly, forms a cyclic heterotetrameric complex composed of two molecules of XerC and two molecules of XerD.

The protein resides in the cytoplasm. Functionally, site-specific tyrosine recombinase, which acts by catalyzing the cutting and rejoining of the recombining DNA molecules. The XerC-XerD complex is essential to convert dimers of the bacterial chromosome into monomers to permit their segregation at cell division. It also contributes to the segregational stability of plasmids. The chain is Tyrosine recombinase XerD from Vibrio vulnificus (strain CMCP6).